The primary structure comprises 633 residues: tRNA uridine 5-carboxymethylaminomethyl modification enzyme MnmG (633 aa).

Residues 15-20 (GAGHAG), Ile127, and Ser182 contribute to the FAD site. 276–290 (GPRYCPSIEDKIVRF) lines the NAD(+) pocket. Gln373 is a binding site for FAD.

It belongs to the MnmG family. Homodimer. Heterotetramer of two MnmE and two MnmG subunits. Requires FAD as cofactor.

It localises to the cytoplasm. Its function is as follows. NAD-binding protein involved in the addition of a carboxymethylaminomethyl (cmnm) group at the wobble position (U34) of certain tRNAs, forming tRNA-cmnm(5)s(2)U34. The sequence is that of tRNA uridine 5-carboxymethylaminomethyl modification enzyme MnmG from Streptococcus agalactiae serotype III (strain NEM316).